Here is a 344-residue protein sequence, read N- to C-terminus: BURP domain-containing protein 16 (344 aa).

The signal sequence occupies residues 1–25 (MATSFLFSLILLLITALSLPFPLHA). N-linked (GlcNAc...) asparagine glycans are attached at residues N90, N120, N181, and N333. The BURP domain maps to 128 to 341 (FFREQELKEG…FNGSMTWVIA (214 aa)).

In terms of tissue distribution, expressed in roots, stems, leaves and panicles.

The polypeptide is BURP domain-containing protein 16 (BURP16) (Oryza sativa subsp. japonica (Rice)).